A 263-amino-acid chain; its full sequence is Histidine racemase (263 aa).

Catalysis depends on cysteine 67, which acts as the Proton acceptor. Catalysis depends on cysteine 209, which acts as the Proton donor.

It belongs to the histidine racemase family. Homodimer.

It carries out the reaction L-histidine = D-histidine. Its function is as follows. Cofactor-independent isomerase that catalyzes the reversible conversion of L-histidine to D-histidine. May play a role in growth of F.nucleatum. The chain is Histidine racemase from Fusobacterium nucleatum subsp. nucleatum (strain ATCC 23726 / VPI 4351).